We begin with the raw amino-acid sequence, 244 residues long: Triosephosphate isomerase (244 aa).

A substrate-binding site is contributed by 9-11 (NWK). Catalysis depends on histidine 93, which acts as the Electrophile. Residue glutamate 160 is the Proton acceptor of the active site. Substrate contacts are provided by glycine 166 and serine 206.

It belongs to the triosephosphate isomerase family. Homodimer.

The protein resides in the cytoplasm. The catalysed reaction is D-glyceraldehyde 3-phosphate = dihydroxyacetone phosphate. Its pathway is carbohydrate biosynthesis; gluconeogenesis. It participates in carbohydrate degradation; glycolysis; D-glyceraldehyde 3-phosphate from glycerone phosphate: step 1/1. Its function is as follows. Involved in the gluconeogenesis. Catalyzes stereospecifically the conversion of dihydroxyacetone phosphate (DHAP) to D-glyceraldehyde-3-phosphate (G3P). The sequence is that of Triosephosphate isomerase from Mycoplasma genitalium (strain ATCC 33530 / DSM 19775 / NCTC 10195 / G37) (Mycoplasmoides genitalium).